The following is a 289-amino-acid chain: Tachykinins (289 aa).

The N-terminal stretch at 1-24 is a signal peptide; it reads MRPLSGLIALALLLLLLLTAPSSA. The segment at 24–94 is disordered; the sequence is AADTETESSG…DEEADSSYAE (71 aa). The propeptide occupies 25-47; sequence ADTETESSGSPLTPGAEEPRRVV. Arg59 carries the post-translational modification Arginine amide. Positions 60–69 are enriched in basic and acidic residues; sequence GKKDEEHDTS. Asn95 is modified (asparagine amide). Arg110 bears the Arginine amide mark. Valine amide is present on Val153. Arg165, Arg200, Arg239, and Arg281 each carry arginine amide. The propeptide occupies 285–289; the sequence is PALFE.

The protein belongs to the tachykinin family. Strong expression is seen in a group of 14 cells plus one isolated cell in the midgut of stage 17 embryos. Also expressed in a pair of medially located unidentified cells, just posterior to the brain, and in two lateral groups of cells that may be associated with tracheae. Expression in the larval gut is restricted to cells with endocrine cell-like morphology in the posterior midgut, just anterior to the malphigian tubules. In the brain, expression is detected in a restricted number of neuronal cell bodies. Expression in the adult female gut is restricted to the midgut with no expression detected in the hindgut.

It localises to the secreted. Its function is as follows. Tachykinins are active peptides which excite neurons, evoke behavioral responses, are potent vasodilators and secretagogues, and contract (directly or indirectly) many smooth muscles. Stimulates gut muscle contractions. Required for the response to the male sex pheromone CH503 which is transferred from males to females during mating and inhibits courtship behavior by other males. The Gr68a gustatory receptor is required for detection of the pheromone and Gr68a-expressing neurons in the male foreleg relay signals to the suboesophageal zone (SEZ) which leads to courtship suppression through release of tachykinin from a cluster of 8-10 neurons in the SEZ. The chain is Tachykinins from Drosophila melanogaster (Fruit fly).